A 1166-amino-acid polypeptide reads, in one-letter code: IQ domain-containing protein N (1166 aa).

Positions 1 to 19 are enriched in polar residues; the sequence is MQPATQLQFTNHLSPNGQC. Positions 1–56 are disordered; that stretch reads MQPATQLQFTNHLSPNGQCILQPPPTPSLPDKMEKAPPQPQHEGLKSEEHLPQQPA. The IQ 1 domain occupies 89 to 118; that stretch reads HARAATLIQANWRGYRLRQKLISQMTAAKA. Disordered stretches follow at residues 431-450, 769-797, and 829-848; these read VCPG…VATP, LSAP…TTQG, and DSGA…PCQE. IQ domains are found at residues 907–932, 928–955, 952–979, 1091–1119, and 1114–1143; these read AVTT…RRAT, HRRA…RATT, RATT…MLHP, RDKA…MAAK, and QQMA…LLGP. A disordered region spans residues 1145–1166; the sequence is DPWSSSQHMHWASSQHTHWPGI. A compositionally biased stretch (polar residues) spans 1147-1166; sequence WSSSQHMHWASSQHTHWPGI.

In terms of assembly, interacts with calmodulin.

Essential for spermiogenesis and fertilization. May be required for manchette assembly in elongating spermatids. The sequence is that of IQ domain-containing protein N (IQCN) from Macaca fascicularis (Crab-eating macaque).